The sequence spans 266 residues: GTP cyclohydrolase MptA (266 aa).

The protein belongs to the GTP cyclohydrolase IV family. Homodimer. Requires Fe(2+) as cofactor.

It catalyses the reaction GTP + H2O = 7,8-dihydroneopterin 2',3'-cyclic phosphate + formate + diphosphate + H(+). The protein operates within cofactor biosynthesis; 5,6,7,8-tetrahydromethanopterin biosynthesis. Converts GTP to 7,8-dihydro-D-neopterin 2',3'-cyclic phosphate, the first intermediate in the biosynthesis of coenzyme methanopterin. The sequence is that of GTP cyclohydrolase MptA from Pyrococcus abyssi (strain GE5 / Orsay).